Consider the following 40-residue polypeptide: Photosystem II reaction center protein J (40 aa).

Residues 8–28 (IPLWLIGTVTGIPVIGLVGVF) traverse the membrane as a helical segment.

It belongs to the PsbJ family. In terms of assembly, PSII is composed of 1 copy each of membrane proteins PsbA, PsbB, PsbC, PsbD, PsbE, PsbF, PsbH, PsbI, PsbJ, PsbK, PsbL, PsbM, PsbT, PsbX, PsbY, PsbZ, Psb30/Ycf12, at least 3 peripheral proteins of the oxygen-evolving complex and a large number of cofactors. It forms dimeric complexes.

The protein localises to the plastid. The protein resides in the chloroplast thylakoid membrane. Functionally, one of the components of the core complex of photosystem II (PSII). PSII is a light-driven water:plastoquinone oxidoreductase that uses light energy to abstract electrons from H(2)O, generating O(2) and a proton gradient subsequently used for ATP formation. It consists of a core antenna complex that captures photons, and an electron transfer chain that converts photonic excitation into a charge separation. The polypeptide is Photosystem II reaction center protein J (Lolium perenne (Perennial ryegrass)).